Reading from the N-terminus, the 173-residue chain is Shikimate kinase 2 (173 aa).

Position 12–17 (12–17 (GCGKTT)) interacts with ATP. Positions 16 and 32 each coordinate Mg(2+). Residues Asp-34, Arg-58, and Gly-79 each coordinate substrate. The segment at 112 to 126 (EENPQDNQRPTLTGR) is LID domain. Arg-120 serves as a coordination point for ATP. Residue Arg-139 participates in substrate binding. ATP is bound at residue Gln-155.

This sequence belongs to the shikimate kinase family. AroL subfamily. In terms of assembly, monomer. Requires Mg(2+) as cofactor.

It localises to the cytoplasm. The catalysed reaction is shikimate + ATP = 3-phosphoshikimate + ADP + H(+). It participates in metabolic intermediate biosynthesis; chorismate biosynthesis; chorismate from D-erythrose 4-phosphate and phosphoenolpyruvate: step 5/7. Its function is as follows. Catalyzes the specific phosphorylation of the 3-hydroxyl group of shikimic acid using ATP as a cosubstrate. The protein is Shikimate kinase 2 of Pectobacterium atrosepticum (strain SCRI 1043 / ATCC BAA-672) (Erwinia carotovora subsp. atroseptica).